Reading from the N-terminus, the 600-residue chain is Albumin (600 aa).

Positions 1-10 (LLFLFSSAYS) are cleaved as a signal peptide. Positions 11–16 (RGVFRR) are excised as a propeptide. 3 consecutive Albumin domains span residues 11–202 (RGVF…DELR), 203–395 (DEGK…EFQP), and 396–593 (LVEE…KFVA). Histidine 19 provides a ligand contact to Cu cation. Serine 21 carries the post-translational modification Phosphoserine. Ca(2+) is bound by residues glutamate 22 and aspartate 29. A disulfide bridge connects residues cysteine 69 and cysteine 78. A phosphoserine mark is found at serine 74 and serine 81. Histidine 83 provides a ligand contact to Zn(2+). Intrachain disulfides connect cysteine 91/cysteine 107, cysteine 106/cysteine 117, cysteine 140/cysteine 185, cysteine 184/cysteine 193, cysteine 216/cysteine 262, and cysteine 261/cysteine 269. The residue at position 99 (threonine 99) is a Phosphothreonine. The residue at position 221 (lysine 221) is an N6-succinyllysine. (4Z,15Z)-bilirubin IXalpha is bound at residue lysine 256. Glutamate 260 is a binding site for Ca(2+). Zn(2+) contacts are provided by histidine 263 and aspartate 265. Residues aspartate 265, glutamate 268, aspartate 271, and aspartate 275 each contribute to the Ca(2+) site. 8 cysteine pairs are disulfide-bonded: cysteine 281–cysteine 295, cysteine 294–cysteine 305, cysteine 332–cysteine 377, cysteine 376–cysteine 385, cysteine 408–cysteine 454, cysteine 453–cysteine 464, cysteine 477–cysteine 493, and cysteine 492–cysteine 503. Position 289 is a phosphoserine (serine 289). Phosphoserine is present on serine 435. Threonine 436 and threonine 438 each carry phosphothreonine. Lysine 452 is modified (N6-succinyllysine). Serine 505 bears the Phosphoserine mark. Intrachain disulfides connect cysteine 530–cysteine 575 and cysteine 574–cysteine 583. Lysine 535 carries the N6-succinyllysine modification. Lysine 550 carries the N6-methyllysine modification. Lysine 580 carries the post-translational modification N6-succinyllysine.

This sequence belongs to the ALB/AFP/VDB family. As to quaternary structure, interacts with FCGRT; this interaction regulates ALB homeostasis. Interacts with TASOR. In plasma, occurs in a covalently-linked complex with chromophore-bound alpha-1-microglobulin; this interaction does not prevent fatty acid binding to ALB. Phosphorylated by FAM20C in the extracellular medium. Plasma.

It localises to the secreted. In terms of biological role, binds water, Ca(2+), Na(+), K(+), fatty acids, hormones, bilirubin and drugs. Its main function is the regulation of the colloidal osmotic pressure of blood. Major zinc transporter in plasma, typically binds about 80% of all plasma zinc. Major calcium and magnesium transporter in plasma, binds approximately 45% of circulating calcium and magnesium in plasma. Potentially has more than two calcium-binding sites and might additionally bind calcium in a non-specific manner. The shared binding site between zinc and calcium at residue Asp-265 suggests a crosstalk between zinc and calcium transport in the blood. The rank order of affinity is zinc &gt; calcium &gt; magnesium. Binds to the bacterial siderophore enterobactin and inhibits enterobactin-mediated iron uptake of E.coli from ferric transferrin, and may thereby limit the utilization of iron and growth of enteric bacteria such as E.coli. Does not prevent iron uptake by the bacterial siderophore aerobactin. The protein is Albumin (ALB) of Macaca mulatta (Rhesus macaque).